Reading from the N-terminus, the 196-residue chain is Imidazole glycerol phosphate synthase subunit HisH (196 aa).

Residues Asn2 to Met196 enclose the Glutamine amidotransferase type-1 domain. Cys77 serves as the catalytic Nucleophile. Residues His178 and Glu180 contribute to the active site.

In terms of assembly, heterodimer of HisH and HisF.

It is found in the cytoplasm. It carries out the reaction 5-[(5-phospho-1-deoxy-D-ribulos-1-ylimino)methylamino]-1-(5-phospho-beta-D-ribosyl)imidazole-4-carboxamide + L-glutamine = D-erythro-1-(imidazol-4-yl)glycerol 3-phosphate + 5-amino-1-(5-phospho-beta-D-ribosyl)imidazole-4-carboxamide + L-glutamate + H(+). It catalyses the reaction L-glutamine + H2O = L-glutamate + NH4(+). It participates in amino-acid biosynthesis; L-histidine biosynthesis; L-histidine from 5-phospho-alpha-D-ribose 1-diphosphate: step 5/9. Its function is as follows. IGPS catalyzes the conversion of PRFAR and glutamine to IGP, AICAR and glutamate. The HisH subunit catalyzes the hydrolysis of glutamine to glutamate and ammonia as part of the synthesis of IGP and AICAR. The resulting ammonia molecule is channeled to the active site of HisF. This Shigella dysenteriae serotype 1 (strain Sd197) protein is Imidazole glycerol phosphate synthase subunit HisH.